The following is a 212-amino-acid chain: Ribosomal RNA large subunit methyltransferase E (212 aa).

The S-adenosyl-L-methionine site is built by Gly57, Trp59, Asp77, Asp93, and Asp122. Catalysis depends on Lys162, which acts as the Proton acceptor.

It belongs to the class I-like SAM-binding methyltransferase superfamily. RNA methyltransferase RlmE family.

It localises to the cytoplasm. It catalyses the reaction uridine(2552) in 23S rRNA + S-adenosyl-L-methionine = 2'-O-methyluridine(2552) in 23S rRNA + S-adenosyl-L-homocysteine + H(+). Its function is as follows. Specifically methylates the uridine in position 2552 of 23S rRNA at the 2'-O position of the ribose in the fully assembled 50S ribosomal subunit. In Coxiella burnetii (strain CbuK_Q154) (Coxiella burnetii (strain Q154)), this protein is Ribosomal RNA large subunit methyltransferase E.